Consider the following 99-residue polypeptide: Integration host factor subunit alpha (99 aa).

The tract at residues 49-71 is disordered; that stretch reads FGNFDLRDKNQRPGRNPKTGEDI.

Belongs to the bacterial histone-like protein family. In terms of assembly, heterodimer of an alpha and a beta chain.

Functionally, this protein is one of the two subunits of integration host factor, a specific DNA-binding protein that functions in genetic recombination as well as in transcriptional and translational control. This Shewanella frigidimarina (strain NCIMB 400) protein is Integration host factor subunit alpha.